A 216-amino-acid polypeptide reads, in one-letter code: Maintenance of carboxysome distribution protein A (216 aa).

ATP-binding residues include glycine 16, glycine 17, glycine 19, lysine 20, threonine 21, threonine 22, and glutamine 45. Threonine 21 serves as a coordination point for Mg(2+).

It belongs to the ParA family. McdA subfamily. As to quaternary structure, self-associates, associates with McdB.

It localises to the cytoplasm. The protein resides in the nucleoid. It carries out the reaction ATP + H2O = ADP + phosphate + H(+). McdA and McdB together mediate carboxysome positioning on the nucleoid and prevent their aggregation in the cell. McdA is an ATPase that forms dynamic gradients on the nucleoid in response to adapter protein McdB, which associates with carboxysomes. The interplay between McdA gradients on the nucleoid and McdB-bound carboxysomes result in the equal spacing of Cbs along the cell length. In terms of biological role, incorrect positioning (aggregation) of carboxysomes results in reduced CO(2) fixation by encapsulated form 1 ribulose-1,5-bisphosphate carboxylase (RuBisCO, cbbL/cbbS), which leads to slower growth. The chain is Maintenance of carboxysome distribution protein A from Halothiobacillus neapolitanus (strain ATCC 23641 / c2) (Thiobacillus neapolitanus).